The following is a 509-amino-acid chain: Zinc finger protein Aiolos (509 aa).

A disordered region spans residues 1–85 (MEDIKPNVEL…PMGNAEEPEI (85 aa)). Positions 10 to 20 (LKSTQEQSVPT) are enriched in polar residues. T20 carries the phosphothreonine modification. Basic and acidic residues predominate over residues 56 to 72 (DSMKVKDEYSERDENVL). Residues K61, K73, and K100 each participate in a glycyl lysine isopeptide (Lys-Gly) (interchain with G-Cter in SUMO2) cross-link. C2H2-type zinc fingers lie at residues 118-140 (MNCDVCGLSCISFNVLMVHKRSH), 146-168 (FQCNQCGASFTQKGNLLRHIKLH), and 174-196 (FKCHLCNYACQRRDALTGHLRTH). A C2H2-type 4; atypical zinc finger spans residues 202 to 224 (YKCEFCGRSYKQRSSLEEHKERC). Residue K245 forms a Glycyl lysine isopeptide (Lys-Gly) (interchain with G-Cter in SUMO2) linkage. T326 is subject to Phosphothreonine. A disordered region spans residues 365-421 (HLPEKSLPSERGLSPTNSGHDSTDTDSNHEERQNHIYQQNPMVPPRARNGMPLLKEG). S378 carries the post-translational modification Phosphoserine. The segment covering 385–398 (DSTDTDSNHEERQN) has biased composition (basic and acidic residues). The segment at 452–474 (YRCDHCRVLFLDYVMFTIHMGCH) adopts a C2H2-type 5 zinc-finger fold. A mediates homodimerization and heterodimerization region spans residues 452–504 (YRCDHCRVLFLDYVMFTIHMGCHGFRDPFECNMCGYRSHDRYEFSSHIARGEH). The C2H2-type 6; atypical zinc finger occupies 480-504 (FECNMCGYRSHDRYEFSSHIARGEH).

It belongs to the Ikaros C2H2-type zinc-finger protein family. As to quaternary structure, homodimer. Heterodimer with other IKAROS family members. Interacts with IKZF4 and IKZF5. Interacts with IKZF1. Interacts with HRAS. Interacts with FOXP3; this interaction may be required for silencing target genes and regulating the suppressive activity of FOXP3-positive regulatory T-cells (Treg). Interacts with BCL21L; this interaction blocks the anti-apoptotic role of BCL21L. Associates with histone deacetylase complexes containing HDAC1, MTA2 and SIN3A.

It is found in the nucleus. The protein localises to the cytoplasm. In terms of biological role, transcription factor that plays an important role in the regulation of lymphocyte differentiation. Plays an essential role in regulation of B-cell differentiation, proliferation and maturation to an effector state. Involved in regulating BCL2 expression and controlling apoptosis in T-cells in an IL2-dependent manner. This is Zinc finger protein Aiolos (IKZF3) from Bos taurus (Bovine).